The following is a 195-amino-acid chain: MDLKVFDGQEKSELSMIEVAHAILAYHNEAMAFADLTNEIQQYLGKSDEEIRERLSQFYTDLNVDGSFISLGDNTWGLRAWYPYESIDEATVGETEDEEDRPKKRRRKVNAFLAGTDDDDDVIDYDNDDPEDEDLDDDQGPDDDDDYEEDDYDEDNPVEDDDEETNIEDQLSELHGDEFGDDEEEDEEDKEDDEE.

An HTH HARE-type domain is found at Leu14–Trp81. The disordered stretch occupies residues Thr91–Glu195. 2 stretches are compositionally biased toward acidic residues: residues Thr116 to Leu171 and Phe179 to Glu195.

This sequence belongs to the RpoE family. RNAP is composed of a core of 2 alpha, a beta and a beta' subunits. The core is associated with a delta subunit and one of several sigma factors.

Its function is as follows. Participates in both the initiation and recycling phases of transcription. In the presence of the delta subunit, RNAP displays an increased specificity of transcription, a decreased affinity for nucleic acids, and an increased efficiency of RNA synthesis because of enhanced recycling. The sequence is that of Probable DNA-directed RNA polymerase subunit delta from Limosilactobacillus fermentum (strain NBRC 3956 / LMG 18251) (Lactobacillus fermentum).